Reading from the N-terminus, the 598-residue chain is Beta-fructofuranosidase, insoluble isoenzyme 2 (598 aa).

Positions 1–25 (MGVLGSRVAWAWLVQLLLLQQLAGA) are cleaved as a signal peptide. Asp69 is a catalytic residue. N-linked (GlcNAc...) asparagine glycans are attached at residues Asn164, Asn189, and Asn348.

The protein belongs to the glycosyl hydrolase 32 family.

Its subcellular location is the secreted. The protein localises to the extracellular space. The protein resides in the apoplast. It is found in the cell wall. The catalysed reaction is Hydrolysis of terminal non-reducing beta-D-fructofuranoside residues in beta-D-fructofuranosides.. May play a role in sucrose partitioning during seed development. The chain is Beta-fructofuranosidase, insoluble isoenzyme 2 (CIN2) from Oryza sativa subsp. indica (Rice).